Here is a 271-residue protein sequence, read N- to C-terminus: Phosphonoacetaldehyde hydrolase (271 aa).

Catalysis depends on Asp12, which acts as the Nucleophile. Asp12 and Ala14 together coordinate Mg(2+). Residue Lys54 is the Schiff-base intermediate with substrate of the active site. Asp188 serves as a coordination point for Mg(2+).

Belongs to the HAD-like hydrolase superfamily. PhnX family. In terms of assembly, homodimer. Requires Mg(2+) as cofactor.

The enzyme catalyses phosphonoacetaldehyde + H2O = acetaldehyde + phosphate + H(+). Its function is as follows. Involved in phosphonate degradation. This chain is Phosphonoacetaldehyde hydrolase, found in Vibrio campbellii (strain ATCC BAA-1116).